Here is a 145-residue protein sequence, read N- to C-terminus: Immunoglobulin iota chain (145 aa).

A signal peptide spans 1-19 (MSWAPVLLMLFVYCTGCGP). The segment at 20-41 (QPVLHQPPAMSSALGTTIRLTC) is framework-1. The region spanning 20–132 (QPVLHQPPAM…EKEEREREWE (113 aa)) is the Ig-like V-type domain. An intrachain disulfide couples C41 to C115. A complementarity-determining-1 region spans residues 42 to 56 (TLRNDHDIGVYSVYW). The framework-2 stretch occupies residues 57–70 (YQQRPGHPPRFLLR). The interval 71–81 (YFSQSDKSQGP) is complementarity-determining-2. The tract at residues 82 to 115 (QVPPRFSGSKDVARNRGYLSISELQPEDEAMYYC) is framework-3. The segment covering 121 to 130 (SSEKEERERE) has biased composition (basic and acidic residues). A disordered region spans residues 121-145 (SSEKEEREREWEEEMEPTAARTRVP).

This sequence belongs to the immunoglobulin superfamily. As to quaternary structure, interacts with IGLL1. Interacts with SYNV1/HRD1 (via N-terminus); this interaction leads to increased VPREB1 ubiquitination and degradation in pre-B cells, possibly through a lysosomal, not proteasomal, pathway. As to expression, only expressed by pre-B-cells.

The protein resides in the endoplasmic reticulum. Functionally, associates with the Ig-mu chain to form a molecular complex that is expressed on the surface of pre-B-cells. This complex presumably regulates Ig gene rearrangements in the early steps of B-cell differentiation. The chain is Immunoglobulin iota chain (VPREB1) from Homo sapiens (Human).